The following is a 223-amino-acid chain: Deoxyribose-phosphate aldolase (223 aa).

The active-site Proton donor/acceptor is aspartate 92. Lysine 158 (schiff-base intermediate with acetaldehyde) is an active-site residue. Residue lysine 188 is the Proton donor/acceptor of the active site.

The protein belongs to the DeoC/FbaB aldolase family. DeoC type 1 subfamily.

The protein resides in the cytoplasm. The enzyme catalyses 2-deoxy-D-ribose 5-phosphate = D-glyceraldehyde 3-phosphate + acetaldehyde. Its pathway is carbohydrate degradation; 2-deoxy-D-ribose 1-phosphate degradation; D-glyceraldehyde 3-phosphate and acetaldehyde from 2-deoxy-alpha-D-ribose 1-phosphate: step 2/2. Its function is as follows. Catalyzes a reversible aldol reaction between acetaldehyde and D-glyceraldehyde 3-phosphate to generate 2-deoxy-D-ribose 5-phosphate. The polypeptide is Deoxyribose-phosphate aldolase (Mycobacterium avium (strain 104)).